A 393-amino-acid polypeptide reads, in one-letter code: Beta-ureidopropionase (393 aa).

Residues 72 to 344 (VRVGLVQNRI…DGLLVTELNL (273 aa)) enclose the CN hydrolase domain. The active-site Proton acceptor is the E119. The active-site Proton donor is the K196. C233 serves as the catalytic Nucleophile. S378 bears the Phosphoserine mark.

The protein belongs to the carbon-nitrogen hydrolase superfamily. BUP family. As to quaternary structure, homodimer, homotetramer, homooctamer; can also form higher homooligomers. The N-terminus is blocked. In terms of tissue distribution, detected in liver (at protein level).

The protein localises to the cytoplasm. The catalysed reaction is 3-(carbamoylamino)propanoate + H2O + 2 H(+) = beta-alanine + NH4(+) + CO2. It catalyses the reaction 3-(carbamoylamino)-2-methylpropanoate + H2O + 2 H(+) = (R)-3-amino-2-methylpropanoate + NH4(+) + CO2. The protein operates within amino-acid biosynthesis; beta-alanine biosynthesis. With respect to regulation, allosteric enzyme with positive cooperativity toward the substrate N-carbamoyl-beta-alanine at low substrate concentrations (below 12 nM). Displays no cooperativity at substrate levels above 12 nM. Catalyzes a late step in pyrimidine degradation. Converts N-carbamoyl-beta-alanine (3-ureidopropanoate) into beta-alanine, ammonia and carbon dioxide. Likewise, converts N-carbamoyl-beta-aminoisobutyrate (3-ureidoisobutyrate) into beta-aminoisobutyrate, ammonia and carbon dioxide. The protein is Beta-ureidopropionase (Upb1) of Rattus norvegicus (Rat).